The following is a 326-amino-acid chain: Undecaprenyl-phosphate 4-deoxy-4-formamido-L-arabinose transferase (326 aa).

The next 2 membrane-spanning stretches (helical) occupy residues 236-256 (LSVV…LLIV) and 270-290 (VFTL…AMGL).

The protein belongs to the glycosyltransferase 2 family.

The protein resides in the cell inner membrane. It catalyses the reaction UDP-4-deoxy-4-formamido-beta-L-arabinose + di-trans,octa-cis-undecaprenyl phosphate = 4-deoxy-4-formamido-alpha-L-arabinopyranosyl di-trans,octa-cis-undecaprenyl phosphate + UDP. It functions in the pathway glycolipid biosynthesis; 4-amino-4-deoxy-alpha-L-arabinose undecaprenyl phosphate biosynthesis; 4-amino-4-deoxy-alpha-L-arabinose undecaprenyl phosphate from UDP-4-deoxy-4-formamido-beta-L-arabinose and undecaprenyl phosphate: step 1/2. Its pathway is bacterial outer membrane biogenesis; lipopolysaccharide biosynthesis. In terms of biological role, catalyzes the transfer of 4-deoxy-4-formamido-L-arabinose from UDP to undecaprenyl phosphate. The modified arabinose is attached to lipid A and is required for resistance to polymyxin and cationic antimicrobial peptides. This is Undecaprenyl-phosphate 4-deoxy-4-formamido-L-arabinose transferase from Proteus mirabilis (strain HI4320).